The sequence spans 451 residues: Tubulin gamma-1 chain (451 aa).

At S131 the chain carries Phosphoserine; by BRSK1. 142–148 provides a ligand contact to GTP; sequence AGGTGSG.

The protein belongs to the tubulin family. As to quaternary structure, component of the gamma-tubulin ring complex (gTuRC) consisting of TUBGCP2, TUBGCP3, TUBGCP4, TUBGCP5 and TUBGCP6 and gamma-tubulin TUBG1 or TUBG2. TUBGCP2, TUBGCP3, TUBGCP4, TUBGCP5 and TUBGCP6 assemble in a 5:5:2:1:1 stoichiometry; each is associated with a gamma-tubulin, thereby arranging 14 gamma-tubulins in a helical manner. Gamma-tubulin at the first position is blocked by TUBGCP3 at the last position, allowing 13 protafilaments to grow into a microtubule. The gTuRC (via TUBGCP3 and TUBGCP6) interacts with ACTB and MZT1; the interactions form a luminal bridge that stabilizes the initial structure during complex assembly. The gTuRC (via TUBGCP2) interacts with MZT2A/MZT2B and CDK5RAP2 (via CM1 motif); the interactions play a role in gTuRC activation. Interacts with alpha-beta tubulin heterodimers; the interaction allows microtubules to nucleate from the gTuRC. Interacts with B9D2. Interacts with CDK5RAP2; the interaction is leading to centrosomal localization of TUBG1 and CDK5RAP2. Interacts with CIMAP3. Interacts with SAS6 and NUP62 at the centrosome. Interacts with EML3 (phosphorylated at 'Thr-881') and HAUS8. Interacts with DNM2; this interaction may participate in centrosome cohesion. Interacts with CCDC66. Phosphorylation at Ser-131 by BRSK1 regulates centrosome duplication, possibly by mediating relocation of gamma-tubulin and its associated proteins from the cytoplasm to the centrosome.

Its subcellular location is the cytoplasm. The protein resides in the cytoskeleton. The protein localises to the microtubule organizing center. It is found in the centrosome. It localises to the spindle. Its function is as follows. Tubulin is the major constituent of microtubules, protein filaments consisting of alpha- and beta-tubulin heterodimers. Gamma-tubulin is a key component of the gamma-tubulin ring complex (gTuRC) which mediates microtubule nucleation. The gTuRC regulates the minus-end nucleation of alpha-beta tubulin heterodimers that grow into microtubule protafilaments, a critical step in centrosome duplication and spindle formation. The chain is Tubulin gamma-1 chain from Homo sapiens (Human).